The primary structure comprises 379 residues: UDP-4-amino-4-deoxy-L-arabinose--oxoglutarate aminotransferase (379 aa).

N6-(pyridoxal phosphate)lysine is present on K182.

This sequence belongs to the DegT/DnrJ/EryC1 family. ArnB subfamily. As to quaternary structure, homodimer. Pyridoxal 5'-phosphate is required as a cofactor.

It carries out the reaction UDP-4-amino-4-deoxy-beta-L-arabinose + 2-oxoglutarate = UDP-beta-L-threo-pentopyranos-4-ulose + L-glutamate. The protein operates within nucleotide-sugar biosynthesis; UDP-4-deoxy-4-formamido-beta-L-arabinose biosynthesis; UDP-4-deoxy-4-formamido-beta-L-arabinose from UDP-alpha-D-glucuronate: step 2/3. It participates in bacterial outer membrane biogenesis; lipopolysaccharide biosynthesis. In terms of biological role, catalyzes the conversion of UDP-4-keto-arabinose (UDP-Ara4O) to UDP-4-amino-4-deoxy-L-arabinose (UDP-L-Ara4N). The modified arabinose is attached to lipid A and is required for resistance to polymyxin and cationic antimicrobial peptides. The chain is UDP-4-amino-4-deoxy-L-arabinose--oxoglutarate aminotransferase from Enterobacter sp. (strain 638).